An 88-amino-acid polypeptide reads, in one-letter code: Small ribosomal subunit protein bS20 (88 aa).

The span at 1-12 (MANHKSALKRAK) shows a compositional bias: basic residues. The disordered stretch occupies residues 1–23 (MANHKSALKRAKQNTIKQMRNRS).

The protein belongs to the bacterial ribosomal protein bS20 family.

Binds directly to 16S ribosomal RNA. The protein is Small ribosomal subunit protein bS20 of Desulfatibacillum aliphaticivorans.